The following is an 847-amino-acid chain: Alanine--tRNA ligase (847 aa).

The Zn(2+) site is built by His554, His558, Cys656, and His660.

The protein belongs to the class-II aminoacyl-tRNA synthetase family. The cofactor is Zn(2+).

It is found in the cytoplasm. It carries out the reaction tRNA(Ala) + L-alanine + ATP = L-alanyl-tRNA(Ala) + AMP + diphosphate. Catalyzes the attachment of alanine to tRNA(Ala) in a two-step reaction: alanine is first activated by ATP to form Ala-AMP and then transferred to the acceptor end of tRNA(Ala). Also edits incorrectly charged Ser-tRNA(Ala) and Gly-tRNA(Ala) via its editing domain. This chain is Alanine--tRNA ligase, found in Helicobacter pylori (strain ATCC 700392 / 26695) (Campylobacter pylori).